The chain runs to 1499 residues: ABC multidrug transporter A-2 (1499 aa).

Disordered regions lie at residues 1–66 (MAMQ…IDQE) and 80–107 (QISQKSAGPTNTFLDPSSDPELDPNSDK). The span at 16 to 30 (ISSSAGQEVASTIRR) shows a compositional bias: polar residues. The segment covering 31–51 (QFTDADADRIVETPLGEKADS) has biased composition (basic and acidic residues). Over residues 80–94 (QISQKSAGPTNTFLD) the composition is skewed to polar residues. In terms of domain architecture, ABC transporter 1 spans 166-415 (LRSILGCRNR…FIDMGFDCPD (250 aa)). Asn-339 is a glycosylation site (N-linked (GlcNAc...) asparagine). The next 5 helical transmembrane spans lie at 526-546 (MTLATVIGNSIMAFIVSSVFY), 561-581 (LLFFAILLNAFASSLEILTLW), 606-626 (MIVDLPSKFLVSVVFNLILYF), 635-655 (GHFFVFYLFSVTITLTMSNIF), and 669-689 (MVPSSIFMMILVIYTGFTIPV). The N-linked (GlcNAc...) asparagine glycan is linked to Asn-763. The helical transmembrane segment at 778–798 (GIILGFFFFFLAAYIICSELV) threads the bilayer. In terms of domain architecture, ABC transporter 2 spans 857–1100 (FHWQDVCYDI…LIKYFENKGS (244 aa)). An ATP-binding site is contributed by 893 to 900 (GVTGAGKT). Helical transmembrane passes span 1193-1213 (YIYSKAATSIIPPLFIGFTFW), 1227-1247 (FAIFMLLVIFPNLVQQMMPYF), 1268-1288 (AFMLASILVELPWNILMAVPA), 1317-1337 (LLILIFMMFTSTFSSMIIAGI), and 1353-1373 (LCLIFNGVLASPSALPGFWIF). N-linked (GlcNAc...) asparagine glycosylation occurs at Asn-1414. Residues 1466–1486 (GLLFVYIVFNIFAAIFLYWLI) traverse the membrane as a helical segment.

This sequence belongs to the ABC transporter superfamily. ABCG family. PDR (TC 3.A.1.205) subfamily.

It localises to the cell membrane. The enzyme catalyses itraconazole(in) + ATP + H2O = itraconazole(out) + ADP + phosphate + H(+). The catalysed reaction is voriconazole(in) + ATP + H2O = voriconazole(out) + ADP + phosphate + H(+). The efflux inhibitor FK506 impairs the transport activity. Its function is as follows. Pleiotropic ABC efflux transporter that confers resistance to structurally and functionally unrelated compounds including azoles such as itraconazole, posaconazole, and voriconazole. In Aspergillus fumigatus (strain ATCC MYA-4609 / CBS 101355 / FGSC A1100 / Af293) (Neosartorya fumigata), this protein is ABC multidrug transporter A-2.